Here is a 406-residue protein sequence, read N- to C-terminus: Probable 26S proteasome regulatory subunit 10B (406 aa).

Residue 191 to 198 (GPPGTGKT) coordinates ATP.

Belongs to the AAA ATPase family.

Its subcellular location is the cytoplasm. The protein localises to the nucleus. Its function is as follows. The 26S proteasome is involved in the ATP-dependent degradation of ubiquitinated proteins. The regulatory (or ATPase) complex confers ATP dependency and substrate specificity to the 26S complex. The chain is Probable 26S proteasome regulatory subunit 10B (rpt-4) from Caenorhabditis elegans.